The chain runs to 671 residues: NADPH--cytochrome P450 reductase (671 aa).

Residues 1–14 are Lumenal-facing; sequence MSAEHVEEVVSEEP. A helical membrane pass occupies residues 15–35; that stretch reads FLGTLDIALLVVLLVGATWYF. Topologically, residues 36-671 are cytoplasmic; sequence MRSRKKEEAP…QKRYSADVWS (636 aa). In terms of domain architecture, Flavodoxin-like spans 77 to 221; sequence LVVFYGSQTG…DFITWKDRFW (145 aa). FMN contacts are provided by residues 83–88, 135–138, 170–179, and aspartate 205; these read SQTGTA, ATYG, and LGNKTYEHYN. Positions 276 to 515 constitute an FAD-binding FR-type domain; it reads KNPFLASVIV…FIRKSQFRLP (240 aa). Arginine 295 contacts NADP(+). Residues 451–454, 469–471, tyrosine 475, and 485–488 each bind FAD; these read RYYS, TAV, and GVAT. Residues threonine 529, 589 to 590, 595 to 599, and aspartate 632 each bind NADP(+); these read SR and KIYVT. Tryptophan 670 contacts FAD.

The protein belongs to the NADPH--cytochrome P450 reductase family. It in the N-terminal section; belongs to the flavodoxin family. This sequence in the C-terminal section; belongs to the flavoprotein pyridine nucleotide cytochrome reductase family. Requires FAD as cofactor. FMN is required as a cofactor.

The protein localises to the endoplasmic reticulum membrane. The enzyme catalyses 2 oxidized [cytochrome P450] + NADPH = 2 reduced [cytochrome P450] + NADP(+) + H(+). This enzyme is required for electron transfer from NADP to cytochrome P450 in microsomes. It can also provide electron transfer to heme oxygenase and cytochrome B5. The chain is NADPH--cytochrome P450 reductase from Musca domestica (House fly).